A 357-amino-acid chain; its full sequence is 3'(2'),5'-bisphosphate nucleotidase (357 aa).

Residue Asp-49 is the Proton acceptor of the active site. Residues Glu-72, Asp-142, Ile-144, and Asp-145 each coordinate Mg(2+). The active-site Proton acceptor is the Thr-147. Positions 147, 241, 264, 267, 281, and 294 each coordinate adenosine 3',5'-bisphosphate. AMP is bound by residues His-241, Ser-264, Lys-267, Arg-281, and Asp-294. Asp-294 is a Mg(2+) binding site.

Belongs to the inositol monophosphatase superfamily. The cofactor is Mg(2+).

It localises to the cytoplasm. The protein localises to the nucleus. The enzyme catalyses 3'-phosphoadenylyl sulfate + H2O = adenosine 5'-phosphosulfate + phosphate. The catalysed reaction is adenosine 3',5'-bisphosphate + H2O = AMP + phosphate. It catalyses the reaction adenosine 2',5'-bisphosphate + H2O = AMP + phosphate. Phosphatase activity is very sensitive to lithium and moderately sensitive to sodium. The inhibitory effects of lithium and sodium are overcome by high concentrations of potassium. Lithium exerts its inhibitory action by blocking the products of the PAP hydrolysis at the active site. Phosphatase that converts adenosine 3'-phosphate 5'-phosphosulfate (PAPS) to adenosine 5'-phosphosulfate (APS) and 3'(2')-phosphoadenosine 5'-phosphate (PAP) to AMP. May regulate the flux of sulfur in the sulfur-activation pathway by converting PAPS to APS. Involved in salt tolerance. Confers resistance to lithium. Shows no activity on inositol mono- and diphosphates, 3'-AMP, AMP, nicotinamide adenine dinucleotide phosphate (NADP), and p-nitrophenylphosphate. The sequence is that of 3'(2'),5'-bisphosphate nucleotidase (MET22) from Saccharomyces cerevisiae (strain ATCC 204508 / S288c) (Baker's yeast).